A 416-amino-acid polypeptide reads, in one-letter code: Protein PBN1 (416 aa).

The Lumenal portion of the chain corresponds to methionine 1–lysine 385. N-linked (GlcNAc...) asparagine glycans are attached at residues asparagine 24, asparagine 85, asparagine 120, asparagine 212, and asparagine 365. The helical; Signal-anchor for type III membrane protein transmembrane segment at asparagine 386–glycine 405 threads the bilayer. At asparagine 406 to glutamate 416 the chain is on the cytoplasmic side.

This sequence belongs to the PIGX family. In terms of processing, N-glycosylated.

The protein localises to the endoplasmic reticulum membrane. It participates in glycolipid biosynthesis; glycosylphosphatidylinositol-anchor biosynthesis. Its function is as follows. Required for proper folding and/or the stability of a subset of proteins in the endoplasmic reticulum. Aids the autocatalytic processing of PRB1. Component of glycosylphosphatidylinositol-mannosyltransferase 1 which transfers the first of the 4 mannoses in the GPI-anchor precursors during GPI-anchor biosynthesis. Probably acts by stabilizing the mannosyltransferase GPI14. The protein is Protein PBN1 (PBN1) of Saccharomyces cerevisiae (strain ATCC 204508 / S288c) (Baker's yeast).